Here is a 1120-residue protein sequence, read N- to C-terminus: DNA-directed RNA polymerase subunit beta (1120 aa).

The protein belongs to the RNA polymerase beta chain family. In plastids the minimal PEP RNA polymerase catalytic core is composed of four subunits: alpha, beta, beta', and beta''. When a (nuclear-encoded) sigma factor is associated with the core the holoenzyme is formed, which can initiate transcription.

It localises to the plastid. The protein resides in the chloroplast. The enzyme catalyses RNA(n) + a ribonucleoside 5'-triphosphate = RNA(n+1) + diphosphate. DNA-dependent RNA polymerase catalyzes the transcription of DNA into RNA using the four ribonucleoside triphosphates as substrates. This chain is DNA-directed RNA polymerase subunit beta, found in Gracilaria tenuistipitata var. liui (Red alga).